The sequence spans 441 residues: Trigger factor (441 aa).

The 83-residue stretch at 175–257 (GDFISLSLHV…VNAVIEVVAP (83 aa)) folds into the PPIase FKBP-type domain.

This sequence belongs to the FKBP-type PPIase family. Tig subfamily.

It is found in the cytoplasm. It carries out the reaction [protein]-peptidylproline (omega=180) = [protein]-peptidylproline (omega=0). Functionally, involved in protein export. Acts as a chaperone by maintaining the newly synthesized protein in an open conformation. Functions as a peptidyl-prolyl cis-trans isomerase. The polypeptide is Trigger factor (Chlamydia abortus (strain DSM 27085 / S26/3) (Chlamydophila abortus)).